A 490-amino-acid chain; its full sequence is Betaine aldehyde dehydrogenase (490 aa).

K(+)-binding residues include threonine 26, isoleucine 27, and aspartate 93. 150-152 is an NAD(+) binding site; that stretch reads GAW. Lysine 162 functions as the Charge relay system in the catalytic mechanism. 176-179 contributes to the NAD(+) binding site; that stretch reads KPSE. Valine 180 serves as a coordination point for K(+). 230–233 provides a ligand contact to NAD(+); that stretch reads GVAS. Leucine 246 lines the K(+) pocket. Residue glutamate 252 is the Proton acceptor of the active site. 3 residues coordinate NAD(+): glycine 254, cysteine 286, and glutamate 387. Cysteine 286 acts as the Nucleophile in catalysis. Cysteine 286 is subject to Cysteine sulfenic acid (-SOH). K(+) is bound by residues lysine 457 and glycine 460. Glutamate 464 serves as the catalytic Charge relay system.

Belongs to the aldehyde dehydrogenase family. Dimer of dimers. The cofactor is K(+).

The enzyme catalyses betaine aldehyde + NAD(+) + H2O = glycine betaine + NADH + 2 H(+). It participates in amine and polyamine biosynthesis; betaine biosynthesis via choline pathway; betaine from betaine aldehyde: step 1/1. Its function is as follows. Involved in the biosynthesis of the osmoprotectant glycine betaine. Catalyzes the irreversible oxidation of betaine aldehyde to the corresponding acid. The chain is Betaine aldehyde dehydrogenase from Escherichia coli (strain SMS-3-5 / SECEC).